The chain runs to 202 residues: FMN-dependent NADH:quinone oxidoreductase 2 (202 aa).

Residues Ser9, 15–17 (SVS), 93–96 (MYNF), and 137–140 (SRGG) each bind FMN.

Belongs to the azoreductase type 1 family. In terms of assembly, homodimer. FMN is required as a cofactor.

It carries out the reaction 2 a quinone + NADH + H(+) = 2 a 1,4-benzosemiquinone + NAD(+). The enzyme catalyses N,N-dimethyl-1,4-phenylenediamine + anthranilate + 2 NAD(+) = 2-(4-dimethylaminophenyl)diazenylbenzoate + 2 NADH + 2 H(+). Quinone reductase that provides resistance to thiol-specific stress caused by electrophilic quinones. Its function is as follows. Also exhibits azoreductase activity. Catalyzes the reductive cleavage of the azo bond in aromatic azo compounds to the corresponding amines. In Bradyrhizobium diazoefficiens (strain JCM 10833 / BCRC 13528 / IAM 13628 / NBRC 14792 / USDA 110), this protein is FMN-dependent NADH:quinone oxidoreductase 2.